Here is a 237-residue protein sequence, read N- to C-terminus: Isoprenyl transferase (237 aa).

Asp14 is a catalytic residue. Position 14 (Asp14) interacts with Mg(2+). Substrate-binding positions include 15-18, Trp19, Arg27, His31, and 59-61; these read GNGR and STE. The Proton acceptor role is filled by Asn62. Substrate-binding positions include Trp63, Arg65, Arg184, and 190–192; that span reads RIS. Glu203 lines the Mg(2+) pocket.

The protein belongs to the UPP synthase family. As to quaternary structure, homodimer. It depends on Mg(2+) as a cofactor.

Catalyzes the condensation of isopentenyl diphosphate (IPP) with allylic pyrophosphates generating different type of terpenoids. This chain is Isoprenyl transferase, found in Helicobacter hepaticus (strain ATCC 51449 / 3B1).